Here is a 215-residue protein sequence, read N- to C-terminus: Cytochrome b6 (215 aa).

The helical transmembrane segment at 32 to 52 (VFYCFGGMTLTCFLVQLATGF) threads the bilayer. Cysteine 35 contributes to the heme c binding site. The heme b site is built by histidine 86 and histidine 100. Transmembrane regions (helical) follow at residues 90–110 (ASMMVLMMILHIFRVYLTGGF), 116–136 (LTWITGVILAVLTVSFGVTGY), and 186–206 (LHTLFLPALSVIFLLAHFLMI). Positions 187 and 202 each coordinate heme b.

Belongs to the cytochrome b family. PetB subfamily. In terms of assembly, the 4 large subunits of the cytochrome b6-f complex are cytochrome b6, subunit IV (17 kDa polypeptide, PetD), cytochrome f and the Rieske protein, while the 4 small subunits are PetG, PetL, PetM and PetN. The complex functions as a dimer. It depends on heme b as a cofactor. Requires heme c as cofactor.

The protein localises to the plastid. It is found in the chloroplast thylakoid membrane. In terms of biological role, component of the cytochrome b6-f complex, which mediates electron transfer between photosystem II (PSII) and photosystem I (PSI), cyclic electron flow around PSI, and state transitions. The protein is Cytochrome b6 of Cyanidium caldarium (Red alga).